Reading from the N-terminus, the 157-residue chain is Succinate dehydrogenase [ubiquinone] cytochrome b small subunit, mitochondrial (157 aa).

A mitochondrion-targeting transit peptide spans 1–45 (MAALVLLRAGLARPRGVPTALLRGTLLRHSAVLTAAADRSAPARQ). Over 46-61 (SHGGAPQGHGSSKAAS) the chain is Mitochondrial matrix. Residues 62-83 (LHWTSERAVSALLLGLLPAAYL) traverse the membrane as a helical segment. The Mitochondrial intermembrane portion of the chain corresponds to 84-88 (YPGPA). A helical transmembrane segment spans residues 89–109 (VDYSLAAALTLHGHWGLGQVI). Heme b is bound at residue His-100. Topologically, residues 110-118 (TDYVHGDTP) are mitochondrial matrix. Residue Tyr-112 participates in a ubiquinone binding. Residues 119-140 (IKVANTGLYVLSAITFTGLCYF) form a helical membrane-spanning segment. Residues 141–157 (NYYDVGICKAVAMLWSI) are Mitochondrial intermembrane-facing.

The protein belongs to the CybS family. As to quaternary structure, component of complex II composed of four subunits: the flavoprotein (FP) SDHA, iron-sulfur protein (IP) SDHB, and a cytochrome b560 composed of SDHC and SDHD.

Its subcellular location is the mitochondrion inner membrane. Its pathway is carbohydrate metabolism; tricarboxylic acid cycle. Its function is as follows. Membrane-anchoring subunit of succinate dehydrogenase (SDH) that is involved in complex II of the mitochondrial electron transport chain and is responsible for transferring electrons from succinate to ubiquinone (coenzyme Q). SDH also oxidizes malate to the non-canonical enol form of oxaloacetate, enol-oxaloacetate. Enol-oxaloacetate, which is a potent inhibitor of the succinate dehydrogenase activity, is further isomerized into keto-oxaloacetate. The sequence is that of Succinate dehydrogenase [ubiquinone] cytochrome b small subunit, mitochondrial (SDHD) from Gallus gallus (Chicken).